Consider the following 681-residue polypeptide: Hydroxyproline O-galactosyltransferase GALT6 (681 aa).

The Cytoplasmic segment spans residues 1-28 (MRKPKLSKLERLEKFDIFVSLSKQRSVQ). The helical; Signal-anchor for type II membrane protein transmembrane segment at 29–49 (ILMAVGLLYMLLITFEIPFVF) threads the bilayer. Topologically, residues 50 to 681 (KTGLSSLSQD…TGKPQCCNMR (632 aa)) are lumenal. Residues 57 to 80 (SQDPLTRPEKHNSQRELQERRAPT) form a disordered region. Residues 62–78 (TRPEKHNSQRELQERRA) are compositionally biased toward basic and acidic residues. The 215-residue stretch at 187 to 401 (NIMELPCGLT…DIDVHSVFAG (215 aa)) folds into the Galectin domain. Residue Asn629 is glycosylated (N-linked (GlcNAc...) asparagine).

Belongs to the glycosyltransferase 31 family. Mn(2+) is required as a cofactor. Expressed in junveile leaves and stems, and at lower levels in cauline leaves and siliques.

The protein resides in the golgi apparatus membrane. It participates in protein modification; protein glycosylation. In terms of biological role, possesses hydroxyproline O-galactosyltransferase activity. Transfers galactose from UDP-galactose to hydroxyproline residues in the arabinogalactan proteins (AGPs). Is specific for AGPs containing non-contiguous peptidyl hydroxyproline residues. Utilizes UDP-galactose solely as sugar donor. The addition of galactose onto the peptidyl hydroxyproline residues in AGP core proteins represents the first committed step in arabinogalactan polysaccharide addition. AGP glycans play essential roles in both vegetative and reproductive plant growth. The sequence is that of Hydroxyproline O-galactosyltransferase GALT6 from Arabidopsis thaliana (Mouse-ear cress).